The following is a 316-amino-acid chain: Sideroflexin-4 (316 aa).

5 helical membrane-spanning segments follow: residues 83–103, 141–161, 174–194, 230–250, and 263–283; these read QVFL…HKGI, LLIL…QIIL, ICRS…NILV, ISRA…MALL, and IAPI…PVSF.

Belongs to the sideroflexin family.

The protein localises to the mitochondrion inner membrane. Its function is as follows. Mitochondrial amino-acid transporter. Does not act as a serine transporter: not able to mediate transport of serine into mitochondria. This Danio rerio (Zebrafish) protein is Sideroflexin-4.